The following is a 257-amino-acid chain: 1-acyl-sn-glycerol-3-phosphate acyltransferase (257 aa).

Residues 10-30 form a helical membrane-spanning segment; the sequence is VLFYLLLSASAFVWGTLSFFI. Residues 82-87 carry the HXXXXD motif motif; the sequence is HQSTWE. Residues 105–125 traverse the membrane as a helical segment; the sequence is ELLYVPFFGWALALLKPIAID.

This sequence belongs to the 1-acyl-sn-glycerol-3-phosphate acyltransferase family.

The protein resides in the cell inner membrane. It carries out the reaction a 1-acyl-sn-glycero-3-phosphate + an acyl-CoA = a 1,2-diacyl-sn-glycero-3-phosphate + CoA. It functions in the pathway phospholipid metabolism; CDP-diacylglycerol biosynthesis; CDP-diacylglycerol from sn-glycerol 3-phosphate: step 2/3. In terms of biological role, converts lysophosphatidic acid (LPA) into phosphatidic acid by incorporating acyl moiety at the 2 position. The chain is 1-acyl-sn-glycerol-3-phosphate acyltransferase from Pseudomonas aeruginosa (strain ATCC 15692 / DSM 22644 / CIP 104116 / JCM 14847 / LMG 12228 / 1C / PRS 101 / PAO1).